The sequence spans 118 residues: Basic phospholipase A2 2 (118 aa).

Cystine bridges form between cysteine 11-cysteine 71, cysteine 27-cysteine 117, cysteine 29-cysteine 45, cysteine 44-cysteine 98, cysteine 51-cysteine 91, cysteine 60-cysteine 84, and cysteine 78-cysteine 89. Ca(2+) is bound by residues tyrosine 28, glycine 30, and glycine 32. Histidine 48 is a catalytic residue. Aspartate 49 is a Ca(2+) binding site. Residue aspartate 92 is part of the active site.

The protein belongs to the phospholipase A2 family. Group I subfamily. D49 sub-subfamily. Requires Ca(2+) as cofactor. In terms of tissue distribution, expressed by the venom gland.

It is found in the secreted. It carries out the reaction a 1,2-diacyl-sn-glycero-3-phosphocholine + H2O = a 1-acyl-sn-glycero-3-phosphocholine + a fatty acid + H(+). In terms of biological role, snake venom phospholipase A2 (PLA2) that inhibits neuromuscular transmission by blocking acetylcholine release from the nerve termini. PLA2 catalyzes the calcium-dependent hydrolysis of the 2-acyl groups in 3-sn-phosphoglycerides. The sequence is that of Basic phospholipase A2 2 from Laticauda colubrina (Yellow-lipped sea krait).